The following is a 290-amino-acid chain: Poly-beta-1,6-N-acetyl-D-glucosamine N-deacetylase (290 aa).

The signal sequence occupies residues 1–28 (MKYRKFIILVLSILIILPVSTLDGHHIA). A NodB homology domain is found at 114-290 (RSVWINFDDM…KRWDGFHEKD (177 aa)).

This sequence belongs to the polysaccharide deacetylase family.

It localises to the secreted. The protein localises to the cell wall. Catalyzes the N-deacetylation of poly-beta-1,6-N-acetyl-D-glucosamine (PNAG, also referred to as PIA), a biofilm adhesin polysaccharide. N-deacetylation is crucial for attachment of the polysaccharide to the bacterial cell surface; it leads to the introduction of positive charges in the otherwise neutral PIA polymer, allowing electrostatic interactions. In Staphylococcus aureus (strain NCTC 8325 / PS 47), this protein is Poly-beta-1,6-N-acetyl-D-glucosamine N-deacetylase (icaB).